Reading from the N-terminus, the 750-residue chain is Photosystem I P700 chlorophyll a apoprotein A1 (750 aa).

8 helical membrane passes run 70–93 (VFSA…FHGA), 156–179 (LYCT…FHYH), 195–219 (LNHH…HVSL), 291–309 (IAHH…GHMY), 346–369 (WHAQ…HHMY), 385–411 (LSLF…IFMV), 433–455 (AIIS…LYIH), and 531–549 (FLVH…LILL). Cys-573 and Cys-582 together coordinate [4Fe-4S] cluster. A run of 2 helical transmembrane segments spans residues 589 to 610 (HVFL…HFSW) and 664 to 686 (LSAY…MFLF). Residue His-675 participates in chlorophyll a' binding. Chlorophyll a contacts are provided by Met-683 and Tyr-691. Trp-692 serves as a coordination point for phylloquinone. A helical transmembrane segment spans residues 724–744 (AVGVTHYLLGGIATTWAFFLA).

It belongs to the PsaA/PsaB family. As to quaternary structure, the PsaA/B heterodimer binds the P700 chlorophyll special pair and subsequent electron acceptors. PSI consists of a core antenna complex that captures photons, and an electron transfer chain that converts photonic excitation into a charge separation. The eukaryotic PSI reaction center is composed of at least 11 subunits. Requires P700 is a chlorophyll a/chlorophyll a' dimer, A0 is one or more chlorophyll a, A1 is one or both phylloquinones and FX is a shared 4Fe-4S iron-sulfur center. as cofactor.

It localises to the plastid. The protein resides in the chloroplast thylakoid membrane. The enzyme catalyses reduced [plastocyanin] + hnu + oxidized [2Fe-2S]-[ferredoxin] = oxidized [plastocyanin] + reduced [2Fe-2S]-[ferredoxin]. Its function is as follows. PsaA and PsaB bind P700, the primary electron donor of photosystem I (PSI), as well as the electron acceptors A0, A1 and FX. PSI is a plastocyanin-ferredoxin oxidoreductase, converting photonic excitation into a charge separation, which transfers an electron from the donor P700 chlorophyll pair to the spectroscopically characterized acceptors A0, A1, FX, FA and FB in turn. Oxidized P700 is reduced on the lumenal side of the thylakoid membrane by plastocyanin. The chain is Photosystem I P700 chlorophyll a apoprotein A1 from Agrostis stolonifera (Creeping bentgrass).